A 279-amino-acid polypeptide reads, in one-letter code: Large ribosomal subunit protein uL2 (279 aa).

The segment at 222–264 (GVAMNPVDHPHGGGEGRTSGGRNPVTPAGKPTKGAKTRVNKAT) is disordered.

It belongs to the universal ribosomal protein uL2 family. Part of the 50S ribosomal subunit. Forms a bridge to the 30S subunit in the 70S ribosome.

In terms of biological role, one of the primary rRNA binding proteins. Required for association of the 30S and 50S subunits to form the 70S ribosome, for tRNA binding and peptide bond formation. It has been suggested to have peptidyltransferase activity; this is somewhat controversial. Makes several contacts with the 16S rRNA in the 70S ribosome. This is Large ribosomal subunit protein uL2 from Caulobacter sp. (strain K31).